We begin with the raw amino-acid sequence, 336 residues long: Potassium channel subfamily K member 1 (336 aa).

Over 1–20 the chain is Cytoplasmic; it reads MLQSLAGSSCVRLVERHRSA. Residues 21-41 traverse the membrane as a helical segment; the sequence is RCFGFLVLGYLLYLVFGAVVF. The Extracellular portion of the chain corresponds to 42–103; sequence SSVELPYEDL…SNASGNWNWD (62 aa). Asn-95 carries an N-linked (GlcNAc...) asparagine glycan. An intramembrane region (helical) is located at residues 104 to 116; it reads FTSALFFASTVLS. An intramembrane segment occupies 117-122; the sequence is TTGYGH. Residues 117–122 are selectivity filter 1; the sequence is TTGYGH. The Extracellular segment spans residues 123 to 132; that stretch reads TVPLSDGGKA. A helical transmembrane segment spans residues 133–156; it reads FCIIYSVIGIPFTLLFLTAVVQRI. At 157 to 181 the chain is on the cytoplasmic side; the sequence is TVHVTRRPVLYFHIRWGFSKQVVAI. A helical transmembrane segment spans residues 182–202; that stretch reads VHAVLLGFVTVSCFFFIPAAV. At 203–211 the chain is on the extracellular side; the sequence is FSVLEDDWN. The helical intramembrane region spans 212 to 224; sequence FLESFYFCFISLS. The selectivity filter 2 stretch occupies residues 225-230; that stretch reads TIGLGD. Residues 225–231 lie within the membrane without spanning it; that stretch reads TIGLGDY. Residues 232–243 lie on the Extracellular side of the membrane; it reads VPGEGYNQKFRE. The helical transmembrane segment at 244 to 267 threads the bilayer; the sequence is LYKIGITCYLLLGLIAMLVVLETF. Topologically, residues 268–336 are cytoplasmic; sequence CELHELKKFR…SACMDGPANH (69 aa). Lys-274 is covalently cross-linked (Glycyl lysine isopeptide (Lys-Gly) (interchain with G-Cter in SUMO)). The interval 293 to 299 is important for intracellular retention in recycling endosomes; sequence IIEHDQL. Positions 315 to 336 are disordered; the sequence is QKQNEPFVATQSSACMDGPANH. Ser-326 carries the phosphoserine modification.

It belongs to the two pore domain potassium channel (TC 1.A.1.8) family. In terms of assembly, homodimer; disulfide-linked. Heterodimer with KCNK2; disulfide-linked. In astrocytes, forms mostly heterodimeric potassium channels with KCNK2, with only a minor proportion of functional channels containing homodimeric KCNK1. Interacts with KCNK3 and KCNK9, forming functional heterodimeric channels. Interacts with GNG4. Identified in a complex with PSD and ARF6; interacts only with PSD that is bound to ARF6. Interacts with UBE2I. Sumoylation is controversial. Sumoylated by UBE2I. Not sumoylated when expressed in xenopus oocytes or mammalian cells. Sumoylation inactivates the channel, but does not interfere with expression at the cell membrane. Sumoylation of a single subunit is sufficient to silence the dimeric channel. Sumoylation of KCNK1 is sufficient to silence heterodimeric channels formed by KCNK1 and KCNK3 or KCNK9. Desumoylated by SENP1; this activates the channel. Desumoylated by SENP1; this strongly increases halothane-mediated activation of heterodimeric channels formed with KCNK9. SENP1 treatment has no effect.

The protein resides in the cell membrane. It is found in the recycling endosome. The protein localises to the synaptic cell membrane. It localises to the cytoplasmic vesicle. Its subcellular location is the perikaryon. The protein resides in the cell projection. It is found in the dendrite. The protein localises to the apical cell membrane. The enzyme catalyses K(+)(in) = K(+)(out). The catalysed reaction is NH4(+)(in) = NH4(+)(out). It catalyses the reaction Na(+)(in) = Na(+)(out). It carries out the reaction Rb(+)(in) = Rb(+)(out). The enzyme catalyses Cs(+)(in) = Cs(+)(out). The catalysed reaction is Li(+)(in) = Li(+)(out). It catalyses the reaction L-glutamate(out) = L-glutamate(in). It carries out the reaction chloride(in) = chloride(out). Its function is as follows. Ion channel that contributes to passive transmembrane potassium transport and to the regulation of the resting membrane potential in brain astrocytes, but also in kidney and in other tissues. Forms dimeric channels through which potassium ions pass in accordance with their electrochemical gradient. The channel is selective for K(+) ions at physiological potassium concentrations and at neutral pH, but becomes permeable to Na(+) at subphysiological K(+) levels, and upon acidification of the extracellular medium. The homodimer has very low potassium channel activity, when expressed in heterologous systems, and can function as weakly inward rectifying potassium channel. Channel activity is modulated by activation of serotonin receptors. Heterodimeric channels containing KCNK1 and KCNK2 have much higher activity, and may represent the predominant form in astrocytes. Heterodimeric channels containing KCNK1 and KCNK3 or KCNK9 have much higher activity. Heterodimeric channels formed by KCNK1 and KCNK9 may contribute to halothane-sensitive currents. Mediates outward rectifying potassium currents in dentate gyrus granule cells and contributes to the regulation of their resting membrane potential. Contributes to the regulation of action potential firing in dentate gyrus granule cells and down-regulates their intrinsic excitability. In astrocytes, the heterodimer formed by KCNK1 and KCNK2 is required for rapid glutamate release in response to activation of G-protein coupled receptors, such as F2R and CNR1. Required for normal ion and water transport in the kidney. Contributes to the regulation of the resting membrane potential of pancreatic beta cells. The low channel activity of homodimeric KCNK1 may be due to sumoylation. The low channel activity may be due to rapid internalization from the cell membrane and retention in recycling endosomes. Permeable to monovalent cations with ion selectivity for K(+) &gt; Rb(+) &gt;&gt; NH4(+) &gt;&gt; Cs(+) = Na(+) = Li(+). In Pongo abelii (Sumatran orangutan), this protein is Potassium channel subfamily K member 1.